The primary structure comprises 335 residues: Hsp90 co-chaperone Cdc37-like 1 (335 aa).

Over residues 1-11 the composition is skewed to pro residues; it reads MEQPWPPPGPW. The tract at residues 1 to 42 is disordered; that stretch reads MEQPWPPPGPWSFPRTGGETEEESDLDVSPSSSHYSPVPDGG. Residues 2–170 are self-association; that stretch reads EQPWPPPGPW…YEQKIRHFGM (169 aa). Residues 27 to 40 show a composition bias toward low complexity; the sequence is DVSPSSSHYSPVPD. Residues Ser32 and Ser88 each carry the phosphoserine modification. Positions 84–120 form a coiled coil; it reads HNSESLDQEHAKAQTAVSELRQREEEWRQKEEALVQR. The self-association and interaction with Hsp90 stretch occupies residues 147–276; the sequence is KTEEEDKSQS…SRVRLYAQSQ (130 aa). Residues 266-335 form an interaction with Hsp70 region; sequence KSRVRLYAQS…EDDDRMMDTV (70 aa). Positions 277 to 335 are required for interaction with STIP1; the sequence is SLQPVTVQNHVPHSGVGCIGSLESLPQNPDSLQCCTPAPLCSVDSVVHKEDDDRMMDTV.

This sequence belongs to the CDC37 family. As to quaternary structure, self-associates. Forms complexes with Hsp70 and Hsp90. Interacts with CDC37, FKBP4, PPID and STIP1.

The protein localises to the cytoplasm. Co-chaperone that binds to numerous proteins and promotes their interaction with Hsp70 and Hsp90. The chain is Hsp90 co-chaperone Cdc37-like 1 (Cdc37l1) from Mus musculus (Mouse).